We begin with the raw amino-acid sequence, 102 residues long: Large ribosomal subunit protein bL21 (102 aa).

Belongs to the bacterial ribosomal protein bL21 family. In terms of assembly, part of the 50S ribosomal subunit. Contacts protein L20.

In terms of biological role, this protein binds to 23S rRNA in the presence of protein L20. In Nitratiruptor sp. (strain SB155-2), this protein is Large ribosomal subunit protein bL21.